The chain runs to 198 residues: MICOS complex subunit MIC26 (198 aa).

A signal peptide spans 1–25 (MFKVIQRSVGPASLSLLTFKVYAAP). The helical transmembrane segment at 108–128 (PGFFPRLGVIGFAGLIGLLLA) threads the bilayer. An O-linked (Xyl...) (chondroitin sulfate) serine glycan is attached at Ser162.

This sequence belongs to the apolipoprotein O/MICOS complex subunit Mic27 family. Component of the mitochondrial contact site and cristae organizing system (MICOS) complex, composed of at least MICOS10/MIC10, CHCHD3/MIC19, CHCHD6/MIC25, APOOL/MIC27, IMMT/MIC60, APOO/MIC23/MIC26 and MICOS13/MIC13. This complex was also known under the names MINOS or MitOS complex. he MICOS complex associates with mitochondrial outer membrane proteins SAMM50, MTX1 and MTX2 (together described as components of the mitochondrial outer membrane sorting assembly machinery (SAM) complex) and DNAJC11, mitochondrial inner membrane protein TMEM11 and with HSPA9. The MICOS and SAM complexes together with DNAJC11 are part of a large protein complex spanning both membranes termed the mitochondrial intermembrane space bridging (MIB) complex. Interacts with IMMT/MIC60. Interacts with MICOS10/MIC10 and APOOL/MIC27. In terms of processing, O-glycosylation; glycosaminoglycan of chondroitin-sulfate type. Expressed in all tissues examined. Up-regulated in diabetic heart.

The protein resides in the mitochondrion inner membrane. Its subcellular location is the secreted. The protein localises to the mitochondrion. It localises to the golgi apparatus membrane. It is found in the endoplasmic reticulum membrane. Functionally, component of the MICOS complex, a large protein complex of the mitochondrial inner membrane that plays crucial roles in the maintenance of crista junctions, inner membrane architecture, and formation of contact sites to the outer membrane. Plays a crucial role in crista junction formation and mitochondrial function. Can promote cardiac lipotoxicity by enhancing mitochondrial respiration and fatty acid metabolism in cardiac myoblasts. Promotes cholesterol efflux from macrophage cells. Detected in HDL, LDL and VLDL. Secreted by a microsomal triglyceride transfer protein (MTTP)-dependent mechanism, probably as a VLDL-associated protein that is subsequently transferred to HDL. This Homo sapiens (Human) protein is MICOS complex subunit MIC26 (APOO).